The primary structure comprises 254 residues: UPF0246 protein FTN_1542 (254 aa).

The protein belongs to the UPF0246 family.

The sequence is that of UPF0246 protein FTN_1542 from Francisella tularensis subsp. novicida (strain U112).